Consider the following 268-residue polypeptide: LOB domain-containing protein 13 (268 aa).

Residues 51-152 form the LOB domain; sequence TPCAACKLLR…SELTTVRTEI (102 aa). Positions 191–268 are disordered; sequence LLPPPPPPPP…SSDNNVHYFD (78 aa). 2 stretches are compositionally biased toward pro residues: residues 192–205 and 212–222; these read LPPPPPPPPTPRPP and PAPPPTPPVSL. Over residues 223–243 the composition is skewed to low complexity; the sequence is PSPSMVVSSSSSSNSSATNSM. Residues 250-268 are compositionally biased toward polar residues; sequence STAGYSNSLSSDNNVHYFD.

It belongs to the LOB domain-containing protein family. As to expression, expressed in shoots and roots and at low levels in flowers, but not in leaves or inflorescence stems.

The sequence is that of LOB domain-containing protein 13 (LBD13) from Arabidopsis thaliana (Mouse-ear cress).